Reading from the N-terminus, the 90-residue chain is MSSGGLLLLLGLLTLWAELTPISGHDRPKFCYLPADPGECLAHMRSFYYDSESKKCKEFIYGGCHGNANKFPSRDKCRQTCGASAKGRPT.

A signal peptide spans 1 to 24 (MSSGGLLLLLGLLTLWAELTPISG). Residues 31 to 81 (CYLPADPGECLAHMRSFYYDSESKKCKEFIYGGCHGNANKFPSRDKCRQTC) form the BPTI/Kunitz inhibitor domain. 3 cysteine pairs are disulfide-bonded: C31–C81, C40–C64, and C56–C77. A propeptide spanning residues 85 to 90 (AKGRPT) is cleaved from the precursor.

Belongs to the venom Kunitz-type family. As to expression, expressed by the venom gland.

It localises to the secreted. In terms of biological role, serine protease inhibitor. The protein is Kunitz-type serine protease inhibitor B5 of Daboia siamensis (Eastern Russel's viper).